A 277-amino-acid polypeptide reads, in one-letter code: MAIKSYKPTSAGRRNMTTSDFAEITKTTPEKSLLAKKSKTGARNASGRMTVRHHAGGHKQAYRIVDFKRTKDDKTATVKAIEYDPNRTANIALLVYEDGIKSYILAPKGLKVGDKVQSGPDADIKPGNALPLSAIPEGTLIHNIELKPGKGGQLARSAGASAQILGRDGKYIIVRLTSGEVRLVLATNRATIGEVGNAEHSLINWGKAGRNRWRGKRPHVRGSVMNPNDHPHGGGEGKAPVGRPSPMSPWGKKTAGKKTRDKKKASTKFIVRGRKSK.

Positions 212 to 277 (RWRGKRPHVR…KFIVRGRKSK (66 aa)) are disordered. Over residues 254 to 277 (TAGKKTRDKKKASTKFIVRGRKSK) the composition is skewed to basic residues.

Belongs to the universal ribosomal protein uL2 family. As to quaternary structure, part of the 50S ribosomal subunit. Forms a bridge to the 30S subunit in the 70S ribosome.

In terms of biological role, one of the primary rRNA binding proteins. Required for association of the 30S and 50S subunits to form the 70S ribosome, for tRNA binding and peptide bond formation. It has been suggested to have peptidyltransferase activity; this is somewhat controversial. Makes several contacts with the 16S rRNA in the 70S ribosome. In Leuconostoc mesenteroides subsp. mesenteroides (strain ATCC 8293 / DSM 20343 / BCRC 11652 / CCM 1803 / JCM 6124 / NCDO 523 / NBRC 100496 / NCIMB 8023 / NCTC 12954 / NRRL B-1118 / 37Y), this protein is Large ribosomal subunit protein uL2.